Reading from the N-terminus, the 368-residue chain is Cytochrome b (368 aa).

4 helical membrane-spanning segments follow: residues 32–52, 76–98, 112–132, and 174–194; these read FGFLVAMTFVLQIITGITLAF, WEFRMLHATTASFVFLCILIHMT, AWMSGLVLYLLTIATAFLGYV, and FFVLHFILPFIGCIIIVLHIF. 2 residues coordinate heme b: H82 and H96. Heme b-binding residues include H178 and H192. H197 provides a ligand contact to a ubiquinone. The next 4 membrane-spanning stretches (helical) occupy residues 219–239, 285–305, 323–343, and 347–367; these read MLMTDAKCLSYLIGLIFLQAA, GLLVFMSSLINLGLLSEIRAL, GWVIIWVYSMIFLIIIGSAIP, and YILYGRLATILYLTTGLVLCL.

It belongs to the cytochrome b family. In terms of assembly, the main subunits of complex b-c1 are: cytochrome b, cytochrome c1 and the Rieske protein. It depends on heme b as a cofactor.

The protein localises to the mitochondrion inner membrane. In terms of biological role, component of the ubiquinol-cytochrome c reductase complex (complex III or cytochrome b-c1 complex) that is part of the mitochondrial respiratory chain. The b-c1 complex mediates electron transfer from ubiquinol to cytochrome c. Contributes to the generation of a proton gradient across the mitochondrial membrane that is then used for ATP synthesis. The chain is Cytochrome b (MT-CYB) from Toxoplasma gondii.